The primary structure comprises 258 residues: Thrombin-like enzyme saxthrombin (258 aa).

The N-terminal stretch at 1–18 is a signal peptide; sequence MVLIRVLANLLILQLSYA. A propeptide spanning residues 19-24 is cleaved from the precursor; it reads QKSSEL. The Peptidase S1 domain maps to 25–249; that stretch reads VIGGDECNIN…YNHWIQSIIA (225 aa). Disulfide bonds link C31–C163, C50–C66, C98–C256, C142–C210, C174–C189, and C200–C225. N44 is a glycosylation site (N-linked (GlcNAc...) asparagine). Active-site charge relay system residues include H65 and D110. S204 acts as the Charge relay system in catalysis. N251 is a glycosylation site (N-linked (GlcNAc...) asparagine).

This sequence belongs to the peptidase S1 family. Snake venom subfamily. In terms of assembly, monomer. As to expression, expressed by the venom gland.

The protein resides in the secreted. Functionally, thrombin-like snake venom serine protease that shows strong blood coagulation activity in vitro. The chain is Thrombin-like enzyme saxthrombin from Gloydius intermedius (Central Asian pit viper).